The chain runs to 130 residues: Sec-independent protein translocase protein TatB (130 aa).

Residues 1 to 21 (MFDIGFTELTLIFIIGLVVLG) traverse the membrane as a helical segment. Composition is skewed to basic and acidic residues over residues 57–67 (QDMQERMEKQM) and 111–130 (PSDK…RRHD). A disordered region spans residues 57–130 (QDMQERMEKQ…NHDQDSRRHD (74 aa)).

Belongs to the TatB family. In terms of assembly, the Tat system comprises two distinct complexes: a TatABC complex, containing multiple copies of TatA, TatB and TatC subunits, and a separate TatA complex, containing only TatA subunits. Substrates initially bind to the TatABC complex, which probably triggers association of the separate TatA complex to form the active translocon.

It localises to the cell inner membrane. In terms of biological role, part of the twin-arginine translocation (Tat) system that transports large folded proteins containing a characteristic twin-arginine motif in their signal peptide across membranes. Together with TatC, TatB is part of a receptor directly interacting with Tat signal peptides. TatB may form an oligomeric binding site that transiently accommodates folded Tat precursor proteins before their translocation. This is Sec-independent protein translocase protein TatB from Alcanivorax borkumensis (strain ATCC 700651 / DSM 11573 / NCIMB 13689 / SK2).